The following is a 384-amino-acid chain: MKFIDEAKIEVAAGKGGNGATSFRREKFVPRGGPDGGDGGKGGSVWAEADENTNTLVEYRFVKRYQAKNGEKGHGSDRYGAGADDIVLKMPVGTLIRDLDTGETVADLTYHGQRVCLAKGGKGGLGNIHFKSSVNRAPKQSTPGEEGEARSLQLELKVLADVGLLGMPNAGKSTLITAVSAARPKIANYPFTTLHPNLGVVRIDENHSFVMADIPGLIEGAAEGAGLGHRFLKHLSRTGLLLHVVDLAPFDETVNPAEEALAIINELRKYDEELYGKPRWLVLNKLDMLDEEEAQTRTAAFLEAVGWDYPKPDDRFQFDMETPRLFQISALTHQGTQELVHQINQYLTEKKRIEAEKAEAEKAAANVEIIEQQPKTDTGVFKPE.

The Obg domain maps to 1 to 159 (MKFIDEAKIE…RSLQLELKVL (159 aa)). A disordered region spans residues 20–46 (ATSFRREKFVPRGGPDGGDGGKGGSVW). The span at 33–43 (GPDGGDGGKGG) shows a compositional bias: gly residues. Positions 160–348 (ADVGLLGMPN…LVHQINQYLT (189 aa)) constitute an OBG-type G domain. GTP is bound by residues 166–173 (GMPNAGKS), 191–195 (FTTLH), 213–216 (DIPG), 284–287 (NKLD), and 329–331 (SAL). Mg(2+) is bound by residues serine 173 and threonine 193.

Belongs to the TRAFAC class OBG-HflX-like GTPase superfamily. OBG GTPase family. As to quaternary structure, monomer. Requires Mg(2+) as cofactor.

It localises to the cytoplasm. An essential GTPase which binds GTP, GDP and possibly (p)ppGpp with moderate affinity, with high nucleotide exchange rates and a fairly low GTP hydrolysis rate. Plays a role in control of the cell cycle, stress response, ribosome biogenesis and in those bacteria that undergo differentiation, in morphogenesis control. The chain is GTPase Obg from Neisseria meningitidis serogroup B (strain ATCC BAA-335 / MC58).